Here is a 786-residue protein sequence, read N- to C-terminus: Neprilysin-3 (786 aa).

Residues 1-52 (MTRYKQTEFTEDDSSSIGGIQLNEATGHTGMQIRYHTARATWNWRSRNKTEK) are Cytoplasmic-facing. A helical; Signal-anchor for type II membrane protein transmembrane segment spans residues 53–73 (WLLITTFVMAITIFTLLIVLF). Residues 74–786 (TDGGSSDATK…MNPTEKCEVW (713 aa)) lie on the Extracellular side of the membrane. The region spanning 102-786 (PCLNKHCIFA…MNPTEKCEVW (685 aa)) is the Peptidase M13 domain. Intrachain disulfides connect cysteine 103-cysteine 108, cysteine 126-cysteine 771, cysteine 134-cysteine 731, cysteine 190-cysteine 450, and cysteine 659-cysteine 783. Residues asparagine 216, asparagine 226, asparagine 256, asparagine 279, asparagine 305, asparagine 325, asparagine 356, asparagine 388, asparagine 496, and asparagine 569 are each glycosylated (N-linked (GlcNAc...) asparagine). Histidine 622 lines the Zn(2+) pocket. Glutamate 623 is a catalytic residue. Zn(2+) is bound by residues histidine 626 and glutamate 682. Aspartate 686 functions as the Proton donor in the catalytic mechanism. N-linked (GlcNAc...) asparagine glycosylation occurs at asparagine 715.

This sequence belongs to the peptidase M13 family. The cofactor is Zn(2+).

Its subcellular location is the cell membrane. The catalysed reaction is Preferential cleavage of polypeptides between hydrophobic residues, particularly with Phe or Tyr at P1'.. In terms of biological role, metalloendoprotease which is required in the dorsal paired medial neurons for the proper formation of long-term (LTM) and middle-term memories (MTM). Also required in the mushroom body neurons where it functions redundantly with neprilysins Nep2 and Nep4 in normal LTM formation. The protein is Neprilysin-3 of Drosophila melanogaster (Fruit fly).